Reading from the N-terminus, the 231-residue chain is Achaete-scute homolog 1 (231 aa).

Disordered regions lie at residues 1–24 (MESS…FLPP) and 39–92 (AAAA…PELM). A compositionally biased stretch (low complexity) spans 39-51 (AAAAAQSAQQQQP). Residues 76 to 85 (SAAKQVKRQR) show a composition bias toward basic residues. Residues 113–165 (AAVARRNERERNRVKLVNLGFATLREHVPNGAANKKMSKVETLRSAVEYIRAL) enclose the bHLH domain. N6-acetyllysine is present on Lys151.

As to quaternary structure, efficient DNA binding requires dimerization with another bHLH protein. Forms a heterodimer with TCF3. In terms of tissue distribution, developing CNS and PNS at embryonic and postnatal stages. Expressed in the epithelium of glandular stomach.

It localises to the nucleus. Functionally, transcription factor that plays a key role in neuronal differentiation: acts as a pioneer transcription factor, accessing closed chromatin to allow other factors to bind and activate neural pathways. Directly binds the E box motif (5'-CANNTG-3') on promoters and promotes transcription of neuronal genes. The combination of three transcription factors, ASCL1, POU3F2/BRN2 and MYT1L, is sufficient to reprogram fibroblasts and other somatic cells into induced neuronal (iN) cells in vitro. Plays a role at early stages of development of specific neural lineages in most regions of the CNS, and of several lineages in the PNS. Essential for the generation of olfactory and autonomic neurons. Acts synergistically with FOXN4 to specify the identity of V2b neurons rather than V2a from bipotential p2 progenitors during spinal cord neurogenesis, probably through DLL4-NOTCH signaling activation. Involved in the regulation of neuroendocrine cell development in the glandular stomach. This Mus musculus (Mouse) protein is Achaete-scute homolog 1.